Consider the following 327-residue polypeptide: Polyprenyl transferase andD (327 aa).

8 helical membrane-spanning segments follow: residues 49-69 (LGYI…ASIA), 81-101 (ITLL…WDDI), 140-160 (FAFV…MLFF), 174-194 (PQLI…GLNL), 201-221 (IPMA…DIIY), 244-264 (CLDA…VIAG), 271-291 (APFF…LAMA), and 307-327 (CCTS…VWRS).

This sequence belongs to the UbiA prenyltransferase family. Requires Mg(2+) as cofactor.

Its subcellular location is the membrane. It participates in secondary metabolite biosynthesis; terpenoid biosynthesis. Functionally, polyprenyl transferase; part of the gene cluster that mediates the biosynthesis of anditomin, a fungal meroterpenoid. The first step of the pathway is the synthesis of 3,5-dimethylorsellinic acid (DMOA) by the polyketide synthase andM. DMOA is then converted to the phthalide compound 5,7-dihydroxy-4,6-dimethylphthalide (DHDMP) by the cytochrome P450 monooxygenase andK, which is further prenylated by the prenyltransferase andD to yield farnesyl-DHDMP. Further epoxidation by the FAD-dependent monooxygenase andE leads to epoxyfarnesyl-DHDMP. The next step involves the terpene cyclase andB that converts epoxyfarnesyl-DHDMP into preandiloid A through opening of the epoxide ring followed by the cyclization of the farnesyl moiety. Preandiloid A is in turn oxidized at the C-3 hydroxyl group to yield preandiloid B by the dehydrogenase andC. The dioxygenase andA is solely responsible for the dehydrogenation of preandiloid B leading to the enone preandiloid C, as well as for the intriguing structural rearrangement to generate the bicyclo[2.2.2]octane core, transforming preandiloid C into andiconin. FAD-binding monooxygenase andJ then produces andilesin D which is reduced by dehydrogenase andI to yield andilesin A. Action of acetyltransferase andG followed by a spontaneous acetate elimination leads then to andilesin B, which is in turn substrate of the short chain dehydrogenase andH to yield andilesin C. Finally, the dioxygenase andF catalyzes the transformation of andilesin C to anditomin. In Emericella variicolor (Aspergillus stellatus), this protein is Polyprenyl transferase andD.